Consider the following 189-residue polypeptide: Thymidine kinase (189 aa).

ATP is bound by residues 9–16 and 85–88; these read GTMNSGKT and DESQ. The Proton acceptor role is filled by Glu86. Cys143, Cys146, Cys180, and His183 together coordinate Zn(2+).

This sequence belongs to the thymidine kinase family. In terms of assembly, homotetramer.

The protein localises to the cytoplasm. The catalysed reaction is thymidine + ATP = dTMP + ADP + H(+). The chain is Thymidine kinase from Streptococcus pyogenes serotype M3 (strain ATCC BAA-595 / MGAS315).